The chain runs to 185 residues: Large ribosomal subunit protein bL25 (185 aa).

The protein belongs to the bacterial ribosomal protein bL25 family. CTC subfamily. Part of the 50S ribosomal subunit; part of the 5S rRNA/L5/L18/L25 subcomplex. Contacts the 5S rRNA. Binds to the 5S rRNA independently of L5 and L18.

Functionally, this is one of the proteins that binds to the 5S RNA in the ribosome where it forms part of the central protuberance. This is Large ribosomal subunit protein bL25 from Chlamydia trachomatis serovar A (strain ATCC VR-571B / DSM 19440 / HAR-13).